The sequence spans 400 residues: Homoserine O-acetyltransferase (400 aa).

One can recognise an AB hydrolase-1 domain in the interval 64–374 (NAILVCHALT…DKGHDAFLLD (311 aa)). Catalysis depends on Ser-169, which acts as the Nucleophile. Arg-239 is a substrate binding site. Catalysis depends on residues Asp-335 and His-368. Asp-369 lines the substrate pocket.

This sequence belongs to the AB hydrolase superfamily. MetX family. Homodimer.

The protein resides in the cytoplasm. It catalyses the reaction L-homoserine + acetyl-CoA = O-acetyl-L-homoserine + CoA. It functions in the pathway amino-acid biosynthesis; L-methionine biosynthesis via de novo pathway; O-acetyl-L-homoserine from L-homoserine: step 1/1. In terms of biological role, transfers an acetyl group from acetyl-CoA to L-homoserine, forming acetyl-L-homoserine. The protein is Homoserine O-acetyltransferase of Rhodopseudomonas palustris (strain ATCC BAA-98 / CGA009).